The chain runs to 87 residues: Putative membrane protein insertion efficiency factor (87 aa).

Belongs to the UPF0161 family.

The protein localises to the cell membrane. Its function is as follows. Could be involved in insertion of integral membrane proteins into the membrane. The chain is Putative membrane protein insertion efficiency factor from Streptococcus pyogenes serotype M12 (strain MGAS2096).